A 270-amino-acid polypeptide reads, in one-letter code: Putative pyruvate, phosphate dikinase regulatory protein (270 aa).

148 to 155 (GVSRTSKT) contributes to the ADP binding site.

The protein belongs to the pyruvate, phosphate/water dikinase regulatory protein family. PDRP subfamily.

It catalyses the reaction N(tele)-phospho-L-histidyl/L-threonyl-[pyruvate, phosphate dikinase] + ADP = N(tele)-phospho-L-histidyl/O-phospho-L-threonyl-[pyruvate, phosphate dikinase] + AMP + H(+). The enzyme catalyses N(tele)-phospho-L-histidyl/O-phospho-L-threonyl-[pyruvate, phosphate dikinase] + phosphate + H(+) = N(tele)-phospho-L-histidyl/L-threonyl-[pyruvate, phosphate dikinase] + diphosphate. Bifunctional serine/threonine kinase and phosphorylase involved in the regulation of the pyruvate, phosphate dikinase (PPDK) by catalyzing its phosphorylation/dephosphorylation. The polypeptide is Putative pyruvate, phosphate dikinase regulatory protein (Bacillus cereus (strain B4264)).